Consider the following 467-residue polypeptide: tRNA(Ile)-lysidine synthase (467 aa).

26 to 31 (SGGPDS) contacts ATP.

It belongs to the tRNA(Ile)-lysidine synthase family.

The protein localises to the cytoplasm. It carries out the reaction cytidine(34) in tRNA(Ile2) + L-lysine + ATP = lysidine(34) in tRNA(Ile2) + AMP + diphosphate + H(+). Ligates lysine onto the cytidine present at position 34 of the AUA codon-specific tRNA(Ile) that contains the anticodon CAU, in an ATP-dependent manner. Cytidine is converted to lysidine, thus changing the amino acid specificity of the tRNA from methionine to isoleucine. The chain is tRNA(Ile)-lysidine synthase from Clostridium tetani (strain Massachusetts / E88).